Here is a 221-residue protein sequence, read N- to C-terminus: Glutathione peroxidase 6 (221 aa).

Positions 1 to 19 (MTQQFWGPCLFSLFMAVLA) are cleaved as a signal peptide. Residue cysteine 73 is part of the active site.

This sequence belongs to the glutathione peroxidase family. Expressed in the Bowman glands.

It localises to the secreted. The catalysed reaction is 2 glutathione + H2O2 = glutathione disulfide + 2 H2O. This Rattus norvegicus (Rat) protein is Glutathione peroxidase 6 (Gpx6).